A 46-amino-acid chain; its full sequence is U2-plectoxin-Pt1a (46 aa).

Post-translationally, contains 4 disulfide bonds. In terms of tissue distribution, expressed by the venom gland.

It localises to the secreted. Functionally, potent toxin that may paralyze and/or kill insect pests such as H.virescens (lepidoptera), S.exigua (beet armyworm) and M.sexta (tobacco hornworm). The protein is U2-plectoxin-Pt1a of Plectreurys tristis (Spider).